The following is a 305-amino-acid chain: RNA-binding protein with serine-rich domain 1 (305 aa).

The span at 1–10 (MDLSGVKKKS) shows a compositional bias: basic residues. The segment at 1–161 (MDLSGVKKKS…KRRSPSPKPT (161 aa)) is necessary for interaction with SRP54, nuclear localization and exon-skipping. A disordered region spans residues 1 to 170 (MDLSGVKKKS…TKVHIGRLTR (170 aa)). The segment at 1–220 (MDLSGVKKKS…ENPDEAEKAL (220 aa)) is necessary for interaction with the cleaved p110 isoform of CDC2L1. Residues Lys7 and Lys15 each participate in a glycyl lysine isopeptide (Lys-Gly) (interchain with G-Cter in SUMO2) cross-link. Positions 33 to 59 (DRSDEKSKDRSKDKGATKESSEKDRGR) are enriched in basic and acidic residues. A Phosphoserine modification is found at Ser53. Positions 68-126 (ASSGSSSTRSRSSSTSSSGSSTSTGSSSGSSSSSASSRSGSSSTSRSSSSSSSSGSPSP) are enriched in low complexity. The tract at residues 69–121 (SSGSSSTRSRSSSTSSSGSSTSTGSSSGSSSSSASSRSGSSSTSRSSSSSSSS) is necessary for interactions with UPF2 and UPF3B and UPF2-dependent NMD. Basic residues-rich tracts occupy residues 127–143 (SRRR…KSKP) and 151–167 (RKRR…HIGR). Phosphoserine occurs at positions 155 and 157. The tract at residues 156-242 (PSPKPTKVHI…ITATAVLAPW (87 aa)) is necessary for interaction with PNN and exon-skipping. The segment at 159–244 (KPTKVHIGRL…ATAVLAPWPR (86 aa)) is interaction with SAP18 and ACIN1. At Thr161 the chain carries Phosphothreonine. One can recognise an RRM domain in the interval 161-240 (TKVHIGRLTR…QEITATAVLA (80 aa)). Lys218 carries the N6-acetyllysine modification. The interval 238 to 305 (VLAPWPRPPP…RSRSSSNSSR (68 aa)) is necessary for interaction with TRA2B, nuclear localization and exon-skipping. The segment at 240–305 (APWPRPPPRR…RSRSSSNSSR (66 aa)) is disordered. The span at 242-261 (WPRPPPRRFSPPRRMLPPLP) shows a compositional bias: pro residues. Residues 266–298 (SPPRMRRRSRSPRRRSPARRRSRSPGRRRHRSR) are compositionally biased toward basic residues.

Belongs to the splicing factor SR family. In terms of assembly, found in mRNA splicing-dependent exon junction complexes (EJC). Found in a post-splicing complex with NXF1, RBM8A, UPF1, UPF2, UPF3A, UPF3B and RNPS1. Component of the heterotrimeric ASAP (apoptosis- and splicing-associated protein) and PSAP complexes consisting of RNPS1, SAP18 and either ACIN1 or PNN, respectively; the ASAP and PSAP complexes probably are formed mutually exclusive. Component of the active spliceosome. Associates with polysomes. Interacts with the cleaved p110 isoform of CDC2L1, CSNK2A1, PNN, SART3, SRP54, SRRM1 and TRA2B/SFRS10. Phosphorylated on one or more of the four Ser/Thr residues (Ser-43, Thr-49, Ser-52 or Ser-53). Ser-53 phosphorylation site is important for splicing and translation stimulation activity in vitro.

The protein localises to the nucleus. It is found in the nucleus speckle. Its subcellular location is the cytoplasm. Part of pre- and post-splicing multiprotein mRNP complexes. Auxiliary component of the splicing-dependent multiprotein exon junction complex (EJC) deposited at splice junction on mRNAs. The EJC is a dynamic structure consisting of core proteins and several peripheral nuclear and cytoplasmic associated factors that join the complex only transiently either during EJC assembly or during subsequent mRNA metabolism. Component of the ASAP and PSAP complexes which bind RNA in a sequence-independent manner and are proposed to be recruited to the EJC prior to or during the splicing process and to regulate specific excision of introns in specific transcription subsets. The ASAP complex can inhibit RNA processing during in vitro splicing reactions. The ASAP complex promotes apoptosis and is disassembled after induction of apoptosis. Enhances the formation of the ATP-dependent A complex of the spliceosome. Involved in both constitutive splicing and, in association with SRP54 and TRA2B/SFRS10, in distinctive modulation of alternative splicing in a substrate-dependent manner. Involved in the splicing modulation of BCL2L1/Bcl-X (and probably other apoptotic genes); specifically inhibits formation of proapoptotic isoforms such as Bcl-X(S); the activity is different from the established EJC assembly and function. Participates in mRNA 3'-end cleavage. Involved in UPF2-dependent nonsense-mediated decay (NMD) of mRNAs containing premature stop codons. Also mediates increase of mRNA abundance and translational efficiency. Binds spliced mRNA 20-25 nt upstream of exon-exon junctions. The polypeptide is RNA-binding protein with serine-rich domain 1 (RNPS1) (Bos taurus (Bovine)).